A 341-amino-acid polypeptide reads, in one-letter code: HTH-type transcriptional repressor PurR (341 aa).

One can recognise an HTH lacI-type domain in the interval 2–56 (ATIKDVAKRANVSTTTVSHVINKTRFVAEETRNAVWAAIKELHYSPSAVARSLKV). Residues 4–23 (IKDVAKRANVSTTTVSHVIN) constitute a DNA-binding region (H-T-H motif). Residues 48 to 56 (SAVARSLKV) mediate DNA binding. Hypoxanthine is bound by residues tyrosine 73, arginine 190, threonine 192, phenylalanine 221, and aspartate 275.

As to quaternary structure, homodimer.

It participates in purine metabolism; purine nucleotide biosynthesis [regulation]. In terms of biological role, is the main repressor of the genes involved in the de novo synthesis of purine nucleotides, regulating purB, purC, purEK, purF, purHD, purL, purMN and guaBA expression. PurR is allosterically activated to bind its cognate DNA by binding the purine corepressors, hypoxanthine or guanine, thereby effecting transcription repression. The sequence is that of HTH-type transcriptional repressor PurR from Salmonella arizonae (strain ATCC BAA-731 / CDC346-86 / RSK2980).